We begin with the raw amino-acid sequence, 166 residues long: Phospholipase A2 inhibitor clone 08 (166 aa).

The first 19 residues, 1–19, serve as a signal peptide directing secretion; that stretch reads MRLILLSSLLLLGIFLANG. Positions 46–161 constitute a C-type lectin domain; that stretch reads LKGAFLTVHR…CDDNLLVVCE (116 aa). Intrachain disulfides connect C83/C160 and C138/C152. N122 carries an N-linked (GlcNAc...) asparagine glycan.

It belongs to the alpha-type phospholipase A2 inhibitor family. In terms of assembly, homotrimer; non-covalently linked. As to expression, expressed by the liver.

The protein localises to the secreted. Functionally, this phospholipase A2 inhibitor binds directly phospholipase A2 in the presence or absence of calcium. This is Phospholipase A2 inhibitor clone 08 from Bothrops moojeni (Lance-headed viper).